Reading from the N-terminus, the 123-residue chain is Major pollen allergen Ole e 10 (123 aa).

A signal peptide spans 1 to 21 (MRGTAGVPDQPVPTPTPSVPT). The tract at residues 1 to 37 (MRGTAGVPDQPVPTPTPSVPTSSSPVPKPPTQGNKKW) is disordered. Cys38 and Cys101 are oxidised to a cystine.

In terms of processing, the N-terminus is blocked. Phosphorylated at Ser-24 when expressed as a recombinant protein in a heterologous system. Post-translationally, not glycosylated. In terms of processing, contains two additional disulfide bonds. Expressed in mature and germinating pollen.

The protein resides in the cytoplasmic vesicle. In terms of biological role, carbohydrate-binding protein binding preferentially 1,3-beta-glucans. May be involved in pollen tube wall re-formation during germination. The sequence is that of Major pollen allergen Ole e 10 from Olea europaea (Common olive).